The sequence spans 247 residues: Protein NipSnap homolog 3B (247 aa).

N6-succinyllysine is present on residues lysine 45 and lysine 57.

This sequence belongs to the NipSnap family.

This Homo sapiens (Human) protein is Protein NipSnap homolog 3B (NIPSNAP3B).